The chain runs to 948 residues: METHHIDFSTVLDVSALKAECEALAKRGLDKNEERSALLALLKKASQDGREEARRLLIADGSGLNCAHRISWLQDQIITVLYDLTVHHAYPKQAGVFSVTAVGGYGRDTLAPGSDIDLLFLFQPKPASETHKAVEFILYMLWDMGFKVGHATRSVEECIREAKSDMTVRTAILETRYICGNVALERELQARFDKEIVTNTGPEFIAAKLAERDERHRKAGDTRYLVEPNVKEGKGGLRDLHTLFWISKYYYHVRDPAELVKLGVLSKQEYRLFEKAEDFLWAVRCHMHFLTGKAEERLSFDIQRDIAAALDYNARPGLSAVERFMKHYFLVAKDVGDLTRILCAALEDQQAKATPGLTGVISRFANRSRKIPGTVEFVEDRGRIALANPDVFKRDPVSLIRLFFVADINGLEFHPDALKRVTRSLSLIDNDLRENEEANRLFLSILTSKRDPALILRRMNEAGVLGRFIPEFGKIVSMMQFNMYHHYTVDEHLIRAVEVLSEIDKGRAEDIHPLTNKLMPNIEDRDALYVAVLLHDIAKGREEDHSEAGAAVARKLCPRFGLSPKQTELVVWLIAEHLTMSMVAQTRDLTDRKTIIDFADRVQSLDRLKMLLILTVCDIRAVGPGVWNGWKGQLLRTLYYETELLLSGGFSEVSRKERAEAAAEALEHALADWSQKERKAYVKLHYQPYLLSVPLEDQIRHTQFMRESDKAGKVLATMVRTDSFHAITEITVLSPDHPRLLTVIAGACAAAGANIADAQIFTTSDGRALDTIHVSREFPDDADELRRAATIGKMIEDVLAGRKRLPEVIATRTKNRRKNKAFVIPPSVIITNSLSNKFTVIEVECLDRPGLLSEITAVLSDLSLDIQSARITTFGEKVIDTFYVADLVGQKISNENRRAYITARLKAVMAGEEDEMRERMPSGIIAPAATRGVAVEKSDTEKKAGSAA.

The interval 1–372 (METHHIDFST…RFANRSRKIP (372 aa)) is uridylyltransferase. A uridylyl-removing region spans residues 373-728 (GTVEFVEDRG…VRTDSFHAIT (356 aa)). In terms of domain architecture, HD spans 489 to 605 (VDEHLIRAVE…IDFADRVQSL (117 aa)). ACT domains lie at 729–810 (EITV…EVIA) and 840–921 (VIEV…ERMP).

It belongs to the GlnD family. Mg(2+) is required as a cofactor.

The enzyme catalyses [protein-PII]-L-tyrosine + UTP = [protein-PII]-uridylyl-L-tyrosine + diphosphate. It catalyses the reaction [protein-PII]-uridylyl-L-tyrosine + H2O = [protein-PII]-L-tyrosine + UMP + H(+). Its activity is regulated as follows. Uridylyltransferase (UTase) activity is inhibited by glutamine, while glutamine activates uridylyl-removing (UR) activity. Modifies, by uridylylation and deuridylylation, the PII regulatory proteins (GlnB and homologs), in response to the nitrogen status of the cell that GlnD senses through the glutamine level. Under low glutamine levels, catalyzes the conversion of the PII proteins and UTP to PII-UMP and PPi, while under higher glutamine levels, GlnD hydrolyzes PII-UMP to PII and UMP (deuridylylation). Thus, controls uridylylation state and activity of the PII proteins, and plays an important role in the regulation of nitrogen fixation and metabolism. This is Bifunctional uridylyltransferase/uridylyl-removing enzyme from Rhizobium tropici.